The following is a 182-amino-acid chain: Mitochondrial FAD-linked sulfhydryl oxidase erv1 (182 aa).

An ERV/ALR sulfhydryl oxidase domain is found at Arg-75–Ala-177. Residues Glu-81–Trp-87, His-91, and Tyr-120 each bind FAD. Cystine bridges form between Cys-122–Cys-125 and Cys-153–Cys-170. Residues Cys-153–Lys-165 and Lys-176–Ala-177 each bind FAD.

FAD is required as a cofactor.

It localises to the mitochondrion intermembrane space. It carries out the reaction 2 R'C(R)SH + O2 = R'C(R)S-S(R)CR' + H2O2. FAD-dependent sulfhydryl oxidase that catalyzes disulfide bond formation. Required for the import and folding of small cysteine-containing proteins in the mitochondrial intermembrane space (IMS). In Schizosaccharomyces pombe (strain 972 / ATCC 24843) (Fission yeast), this protein is Mitochondrial FAD-linked sulfhydryl oxidase erv1 (erv1).